A 277-amino-acid chain; its full sequence is MSKSLKKLVEESREKNQPEVDMSDRGISSMLDVNGLFSLAHITQLVLSHNKLTTVPPNVAELKNLEVLNFFNNQIEELPTQISSLQKLKHLNLGMNRLNTLPRGFGSSRLLEVLELTYNNLNEHSLPGNFFYLTTLRALYLSDNDFEILPPDIGKLTKLQILSLRDNDLISLPKEIGELTQLKELHIQGNRLTVLPPELGNLDLTGQKQVFKAENNPWVTPIADQFQLGVSHVFEYIRSETYKYLYGRHMQANPEPPKKNNDKSKKISRKPLAAKNK.

Positions 1-23 are disordered; sequence MSKSLKKLVEESREKNQPEVDMS. S2 is subject to N-acetylserine. The span at 7 to 23 shows a compositional bias: basic and acidic residues; that stretch reads KLVEESREKNQPEVDMS. LRR repeat units follow at residues 41–63, 64–85, 87–108, 110–133, 135–156, 158–179, and 181–202; these read HITQ…AELK, NLEV…ISSL, KLKH…FGSS, LLEV…FFYL, TLRA…IGKL, KLQI…IGEL, and QLKE…LGNL. The disordered stretch occupies residues 250–277; that stretch reads MQANPEPPKKNNDKSKKISRKPLAAKNK. A compositionally biased stretch (basic and acidic residues) spans 256 to 265; sequence PPKKNNDKSK.

Its function is as follows. Potentially plays a role in the Ras signal transduction pathway. Capable of suppressing v-Ras transformation in vitro. The protein is Ras suppressor protein 1 (Rsu1) of Mus musculus (Mouse).